Here is a 337-residue protein sequence, read N- to C-terminus: Molybdate import system permease protein MolB (337 aa).

Residues Met-1–Ser-5 are Cytoplasmic-facing. The helical transmembrane segment at Tyr-6 to Leu-25 threads the bilayer. At Gly-26–Asp-51 the chain is on the periplasmic side. The helical transmembrane segment at Pro-52–Phe-87 threads the bilayer. Over Arg-88–Gly-98 the chain is Cytoplasmic. The helical transmembrane segment at Val-99–Phe-113 threads the bilayer. Residues Gly-114–Ser-116 lie on the Periplasmic side of the membrane. The chain crosses the membrane as a helical span at residues Leu-117–Phe-140. Residues Lys-141–Ser-146 are Cytoplasmic-facing. Residues Leu-147–Ile-171 form a helical membrane-spanning segment. At Ser-172–Asn-193 the chain is on the periplasmic side. The helical transmembrane segment at Trp-194–Leu-214 threads the bilayer. The Cytoplasmic portion of the chain corresponds to Ser-215 to Lys-234. Residues Met-235–Ser-257 form a helical membrane-spanning segment. Over Gly-258–Gly-264 the chain is Periplasmic. A helical transmembrane segment spans residues Leu-265–Val-275. Over Gly-276–Asn-278 the chain is Cytoplasmic. The chain crosses the membrane as a helical span at residues His-279–Leu-304. Residues Ser-305–Pro-310 lie on the Periplasmic side of the membrane. The helical transmembrane segment at Ile-311 to Lys-329 threads the bilayer. Over Leu-330–Glu-337 the chain is Cytoplasmic.

This sequence belongs to the binding-protein-dependent transport system permease family. FecCD subfamily. In terms of assembly, the complex is composed of two ATP-binding proteins (MolC), two transmembrane proteins (MolB) and a solute-binding protein (MolA).

It localises to the cell inner membrane. With respect to regulation, the MolBCA complex shows a decrease in affinity in the presence of increasing concentrations of substrate and nucleotide. In terms of biological role, part of the ABC transporter complex MolBCA involved in molybdate import. Responsible for the translocation of the substrate across the membrane. Functions as a low-affinity molybdate transporter. This Haemophilus influenzae (strain ATCC 51907 / DSM 11121 / KW20 / Rd) protein is Molybdate import system permease protein MolB.